Here is a 607-residue protein sequence, read N- to C-terminus: Chaperone protein dnaK (607 aa).

Residues 579–591 (KASETSNAKTNGK) show a composition bias toward polar residues. The tract at residues 579-607 (KASETSNAKTNGKASEKEDVIDADFKAQE) is disordered. The segment covering 592–607 (ASEKEDVIDADFKAQE) has biased composition (basic and acidic residues).

The protein belongs to the heat shock protein 70 family.

The protein localises to the plastid. It localises to the chloroplast. In terms of biological role, acts as a chaperone. This chain is Chaperone protein dnaK, found in Cyanidioschyzon merolae (strain NIES-3377 / 10D) (Unicellular red alga).